A 137-amino-acid polypeptide reads, in one-letter code: NADPH-dependent 7-cyano-7-deazaguanine reductase (137 aa).

Cys50 serves as the catalytic Thioimide intermediate. The active-site Proton donor is Asp57. Substrate is bound by residues 72–74 (VEL) and 91–92 (HE).

This sequence belongs to the GTP cyclohydrolase I family. QueF type 1 subfamily.

It localises to the cytoplasm. The enzyme catalyses 7-aminomethyl-7-carbaguanine + 2 NADP(+) = 7-cyano-7-deazaguanine + 2 NADPH + 3 H(+). Its pathway is tRNA modification; tRNA-queuosine biosynthesis. Functionally, catalyzes the NADPH-dependent reduction of 7-cyano-7-deazaguanine (preQ0) to 7-aminomethyl-7-deazaguanine (preQ1). In Synechococcus sp. (strain CC9902), this protein is NADPH-dependent 7-cyano-7-deazaguanine reductase.